The following is a 242-amino-acid chain: Probable 2-phosphosulfolactate phosphatase (242 aa).

The protein belongs to the ComB family. Mg(2+) is required as a cofactor.

It carries out the reaction (2R)-O-phospho-3-sulfolactate + H2O = (2R)-3-sulfolactate + phosphate. The chain is Probable 2-phosphosulfolactate phosphatase from Parasynechococcus marenigrum (strain WH8102).